Here is a 434-residue protein sequence, read N- to C-terminus: Tryptophan dimethylallyltransferase nptA (434 aa).

L-tryptophan is bound by residues 91–92 (SL) and Glu-100. 3 residues coordinate substrate: Arg-115, Lys-202, and Tyr-204. Residue Tyr-206 coordinates L-tryptophan. Residues Arg-271, Lys-273, Tyr-275, Tyr-358, Tyr-423, and Tyr-427 each contribute to the substrate site.

It belongs to the tryptophan dimethylallyltransferase family. As to quaternary structure, homodimer.

It carries out the reaction L-tryptophan + dimethylallyl diphosphate = 4-(3-methylbut-2-enyl)-L-tryptophan + diphosphate. Its pathway is secondary metabolite biosynthesis. Functionally, nonribosomal peptide synthase involved in the synthesis of nidulanin A and derived compounds. Nidulanin A is a tetracyclopeptide with the sequence L-Phe-L-Kyn-L-Val-D-Val and an isoprene unit N-linked to the amino group of L-kynurenine. The NRPS nlsA is responsible of the synthesis of the cyclopeptide and the prenyltransferase nptA adds the isoprene unit on the L-kynurenine residue of nidulanin A. Further modifications lead to additional oxygenated related compounds. This is Tryptophan dimethylallyltransferase nptA from Emericella nidulans (strain FGSC A4 / ATCC 38163 / CBS 112.46 / NRRL 194 / M139) (Aspergillus nidulans).